The chain runs to 248 residues: PF03932 family protein CutC (248 aa).

This sequence belongs to the CutC family. In terms of assembly, homodimer.

It localises to the cytoplasm. The polypeptide is PF03932 family protein CutC (Escherichia coli (strain SMS-3-5 / SECEC)).